Consider the following 254-residue polypeptide: tRNA threonylcarbamoyladenosine dehydratase (254 aa).

Belongs to the HesA/MoeB/ThiF family.

Functionally, catalyzes the ATP-dependent dehydration of threonylcarbamoyladenosine at position 37 (t(6)A37) to form cyclic t(6)A37 (ct(6)A37) in tRNAs that read codons beginning with adenine. This Bacillus subtilis (strain 168) protein is tRNA threonylcarbamoyladenosine dehydratase (tcdA).